A 189-amino-acid polypeptide reads, in one-letter code: Large ribosomal subunit protein bL9 (189 aa).

It belongs to the bacterial ribosomal protein bL9 family.

Binds to the 23S rRNA. This chain is Large ribosomal subunit protein bL9, found in Brucella anthropi (strain ATCC 49188 / DSM 6882 / CCUG 24695 / JCM 21032 / LMG 3331 / NBRC 15819 / NCTC 12168 / Alc 37) (Ochrobactrum anthropi).